A 174-amino-acid polypeptide reads, in one-letter code: Gamma-crystallin A (174 aa).

2 Beta/gamma crystallin 'Greek key' domains span residues 2 to 40 and 41 to 83; these read GKIT…RVDS and GCWM…RSIP. The interval 84 to 87 is connecting peptide; the sequence is YTSS. 2 Beta/gamma crystallin 'Greek key' domains span residues 88–128 and 129–171; these read HRIR…HVLE and GSWV…RRVM.

Belongs to the beta/gamma-crystallin family.

Functionally, crystallins are the dominant structural components of the vertebrate eye lens. The sequence is that of Gamma-crystallin A (Cryga) from Rattus norvegicus (Rat).